The chain runs to 102 residues: Ferredoxin (102 aa).

2 4Fe-4S ferredoxin-type domains span residues 45–73 (VSVN…ELVE) and 74–102 (TWIE…EVMK). Positions 54, 57, 60, 64, 83, 86, 89, and 93 each coordinate [4Fe-4S] cluster.

[4Fe-4S] cluster serves as cofactor.

It participates in membrane lipid metabolism; glycerophospholipid metabolism. Functionally, ferredoxin that is the specific electron donor for the geranylgeranyl reductase GGR involved in the biosynthesis of archaeal membrane lipids. This is Ferredoxin from Methanosarcina acetivorans (strain ATCC 35395 / DSM 2834 / JCM 12185 / C2A).